We begin with the raw amino-acid sequence, 957 residues long: Exoribonuclease II, mitochondrial (957 aa).

The N-terminal 54 residues, 1–54 (MNYRQLFLLQNVNLESNYLLKRVCLSLKLSPCKLTRKFHHACPSSSKVLKYFRI), are a transit peptide targeting the mitochondrion. The RNB domain maps to 503–843 (RVDLRHLKAF…FTHHQIQSVL (341 aa)).

Belongs to the RNR ribonuclease family.

It localises to the mitochondrion. It carries out the reaction Exonucleolytic cleavage in the 3'- to 5'-direction to yield nucleoside 5'-phosphates.. Functionally, required for intron-independent turnover and processing of mitochondrial RNA. Participates in 3'-mtRNA processing where it hydrolyzes single-stranded RNA or partially double-stranded RNA with 3'-single-stranded tails. This chain is Exoribonuclease II, mitochondrial (rpm1), found in Schizosaccharomyces pombe (strain 972 / ATCC 24843) (Fission yeast).